The primary structure comprises 301 residues: Mitochondrial thiamine pyrophosphate carrier 1 (301 aa).

3 Solcar repeats span residues 15-102 (VTPT…ISKS), 115-200 (SSAN…AREL), and 206-293 (RVPF…SLSF). 6 helical membrane-spanning segments follow: residues 20–38 (ALVAGSIAGAISRAFTAPL), 79–99 (VPAEILYILYGGVQFGSYSII), 121–141 (LIVGIGSGIVSTLVTYPFDLL), 172–192 (IYAGIRPAMLSVSSTTGLMFW), 207–227 (VPFIEAICGFIAGATSKGITF), and 252–272 (IFVTILKNEGVFGLYKGFGIS).

It belongs to the mitochondrial carrier (TC 2.A.29) family.

The protein resides in the mitochondrion inner membrane. Mitochondrial transporter that mediates uptake of thiamine pyrophosphate (ThPP) into mitochondria. This Candida albicans (strain SC5314 / ATCC MYA-2876) (Yeast) protein is Mitochondrial thiamine pyrophosphate carrier 1 (TPC1).